Reading from the N-terminus, the 312-residue chain is Glyoxylate/hydroxypyruvate reductase A (312 aa).

Arg227 is a catalytic residue. His275 (proton donor) is an active-site residue.

This sequence belongs to the D-isomer specific 2-hydroxyacid dehydrogenase family. GhrA subfamily.

It is found in the cytoplasm. The enzyme catalyses glycolate + NADP(+) = glyoxylate + NADPH + H(+). The catalysed reaction is (R)-glycerate + NAD(+) = 3-hydroxypyruvate + NADH + H(+). It catalyses the reaction (R)-glycerate + NADP(+) = 3-hydroxypyruvate + NADPH + H(+). Catalyzes the NADPH-dependent reduction of glyoxylate and hydroxypyruvate into glycolate and glycerate, respectively. The protein is Glyoxylate/hydroxypyruvate reductase A of Salmonella choleraesuis (strain SC-B67).